A 318-amino-acid polypeptide reads, in one-letter code: tRNA U34 carboxymethyltransferase (318 aa).

The carboxy-S-adenosyl-L-methionine site is built by Lys-88, Trp-102, Lys-107, Gly-126, Met-192, Tyr-196, and Arg-311.

This sequence belongs to the class I-like SAM-binding methyltransferase superfamily. CmoB family. In terms of assembly, homotetramer.

It carries out the reaction carboxy-S-adenosyl-L-methionine + 5-hydroxyuridine(34) in tRNA = 5-carboxymethoxyuridine(34) in tRNA + S-adenosyl-L-homocysteine + H(+). Functionally, catalyzes carboxymethyl transfer from carboxy-S-adenosyl-L-methionine (Cx-SAM) to 5-hydroxyuridine (ho5U) to form 5-carboxymethoxyuridine (cmo5U) at position 34 in tRNAs. This is tRNA U34 carboxymethyltransferase from Pseudomonas fluorescens (strain Pf0-1).